Consider the following 316-residue polypeptide: Protoheme IX farnesyltransferase (316 aa).

Transmembrane regions (helical) follow at residues Val32 to Asn52, Pro53 to Leu73, Ile93 to Phe113, Ala116 to Phe136, Asn152 to Thr172, Thr180 to Phe200, Ile226 to Ala246, Phe248 to Val268, and Ile289 to Val309.

Belongs to the UbiA prenyltransferase family. Protoheme IX farnesyltransferase subfamily.

Its subcellular location is the cell inner membrane. The catalysed reaction is heme b + (2E,6E)-farnesyl diphosphate + H2O = Fe(II)-heme o + diphosphate. The protein operates within porphyrin-containing compound metabolism; heme O biosynthesis; heme O from protoheme: step 1/1. Functionally, converts heme B (protoheme IX) to heme O by substitution of the vinyl group on carbon 2 of heme B porphyrin ring with a hydroxyethyl farnesyl side group. In Rhizobium etli (strain CIAT 652), this protein is Protoheme IX farnesyltransferase.